The primary structure comprises 278 residues: MDIKAYFELIRLKNCLTASFGAFIGGLIASYFNISMIDNLILASIVVFLVCGFGNALNDIYDLKIDKINKPKRPIPSKRISLGEARIFSYLLVVMGLIISMFNITCFLMAVLNSIVLQQYASTYKKNKIVGNLIVAYLTGSVFIFGGIAVGNIDVTIMLFLCALFAMWSREIIKDYEDIEGDIKEKVISIPIKCGEKSIYIAAFLLVFAVLLSPLPYLFGFFGIYYLISVIFCDLLFLIGIYNLVMNPSKKEAKKASRNIKIVTNLVLIAFLIGSLFK.

A run of 7 helical transmembrane segments spans residues 12-32, 34-54, 91-111, 142-162, 204-224, 226-246, and 257-277; these read LKNC…ASYF, ISMI…CGFG, LLVV…LMAV, VFIF…LFLC, FLLV…FFGI, YLIS…NLVM, and SRNI…GSLF.

It belongs to the UbiA prenyltransferase family. DGGGP synthase subfamily. Requires Mg(2+) as cofactor.

Its subcellular location is the cell membrane. It catalyses the reaction sn-3-O-(geranylgeranyl)glycerol 1-phosphate + (2E,6E,10E)-geranylgeranyl diphosphate = 2,3-bis-O-(geranylgeranyl)-sn-glycerol 1-phosphate + diphosphate. Its pathway is membrane lipid metabolism; glycerophospholipid metabolism. Functionally, prenyltransferase that catalyzes the transfer of the geranylgeranyl moiety of geranylgeranyl diphosphate (GGPP) to the C2 hydroxyl of (S)-3-O-geranylgeranylglyceryl phosphate (GGGP). This reaction is the second ether-bond-formation step in the biosynthesis of archaeal membrane lipids. The chain is Digeranylgeranylglyceryl phosphate synthase from Methanococcus maripaludis (strain C6 / ATCC BAA-1332).